Consider the following 154-residue polypeptide: MGRFIFVSFGLLVVFLSLSGTGADVDCLPGWSAYDQSCYRVFKLLKTWDDAEKFCTERPKGGHLVSIESAGERDFVAQLVSENKQTDNVWLGLKIQSKGQQCSTEWTDGSSVSYENFSEYQSKKCFVLEKNTGFRTWLNLNCGSEYAFVCKSPP.

Positions 1 to 23 are cleaved as a signal peptide; sequence MGRFIFVSFGLLVVFLSLSGTGA. Cystine bridges form between Cys27–Cys38, Cys55–Cys150, and Cys125–Cys142. In terms of domain architecture, C-type lectin spans 34-151; sequence YDQSCYRVFK…CGSEYAFVCK (118 aa). Asn116 carries N-linked (GlcNAc...) asparagine glycosylation.

Belongs to the snaclec family. Heterotetramer of the subunits alpha-1, alpha-2, beta-1 and beta-2; disulfide-linked. In terms of tissue distribution, expressed by the venom gland.

The protein resides in the secreted. Agglucetin specifically causes platelet aggregation and surface exposure of integrin alpha-IIb/beta-3 with a GPIb-(GP1BA-) dependent manner in washed platelets. It binds to human platelets in a saturable manner, and its binding is specifically blocked by anti-GP Ib mAb. It regulates endothelial cell survival and promotes angiogenesis by activating integrin alpha-v/beta-3 signaling through FAK/phosphatidylinositol 3-kinase (PI3K)/Akt pathway. This Deinagkistrodon acutus (Hundred-pace snake) protein is Snaclec agglucetin subunit alpha-1.